Consider the following 556-residue polypeptide: 2-succinyl-5-enolpyruvyl-6-hydroxy-3-cyclohexene-1-carboxylate synthase (556 aa).

This sequence belongs to the TPP enzyme family. MenD subfamily. Homodimer. The cofactor is Mg(2+). Mn(2+) serves as cofactor. Requires thiamine diphosphate as cofactor.

The catalysed reaction is isochorismate + 2-oxoglutarate + H(+) = 5-enolpyruvoyl-6-hydroxy-2-succinyl-cyclohex-3-ene-1-carboxylate + CO2. Its pathway is quinol/quinone metabolism; 1,4-dihydroxy-2-naphthoate biosynthesis; 1,4-dihydroxy-2-naphthoate from chorismate: step 2/7. It functions in the pathway quinol/quinone metabolism; menaquinone biosynthesis. Functionally, catalyzes the thiamine diphosphate-dependent decarboxylation of 2-oxoglutarate and the subsequent addition of the resulting succinic semialdehyde-thiamine pyrophosphate anion to isochorismate to yield 2-succinyl-5-enolpyruvyl-6-hydroxy-3-cyclohexene-1-carboxylate (SEPHCHC). The polypeptide is 2-succinyl-5-enolpyruvyl-6-hydroxy-3-cyclohexene-1-carboxylate synthase (Shigella sonnei (strain Ss046)).